Reading from the N-terminus, the 704-residue chain is Polyribonucleotide nucleotidyltransferase (704 aa).

Positions 487 and 493 each coordinate Mg(2+). A KH domain is found at 554–613 (PRLLTIKIHPDKIREVIGKGGSTIQAITKETGTQIDIQDDGTIIIASVNAIAAQAAKSRI). Positions 623-691 (GRIYEGKVAK…KQGRIRLSIK (69 aa)) constitute an S1 motif domain.

It belongs to the polyribonucleotide nucleotidyltransferase family. Component of the RNA degradosome, which is a multiprotein complex involved in RNA processing and mRNA degradation. Mg(2+) is required as a cofactor.

The protein localises to the cytoplasm. The catalysed reaction is RNA(n+1) + phosphate = RNA(n) + a ribonucleoside 5'-diphosphate. Involved in mRNA degradation. Catalyzes the phosphorolysis of single-stranded polyribonucleotides processively in the 3'- to 5'-direction. This is Polyribonucleotide nucleotidyltransferase from Xanthomonas oryzae pv. oryzae (strain MAFF 311018).